Reading from the N-terminus, the 54-residue chain is Large ribosomal subunit protein bL33B (54 aa).

Belongs to the bacterial ribosomal protein bL33 family.

This chain is Large ribosomal subunit protein bL33B, found in Myxococcus xanthus (strain DK1622).